The chain runs to 318 residues: Acetyl-coenzyme A carboxylase carboxyl transferase subunit alpha (318 aa).

In terms of domain architecture, CoA carboxyltransferase C-terminal spans 32–293 (NINEEIQRLE…REALREEWAR (262 aa)).

This sequence belongs to the AccA family. In terms of assembly, acetyl-CoA carboxylase is a heterohexamer composed of biotin carboxyl carrier protein (AccB), biotin carboxylase (AccC) and two subunits each of ACCase subunit alpha (AccA) and ACCase subunit beta (AccD).

The protein resides in the cytoplasm. The enzyme catalyses N(6)-carboxybiotinyl-L-lysyl-[protein] + acetyl-CoA = N(6)-biotinyl-L-lysyl-[protein] + malonyl-CoA. Its pathway is lipid metabolism; malonyl-CoA biosynthesis; malonyl-CoA from acetyl-CoA: step 1/1. In terms of biological role, component of the acetyl coenzyme A carboxylase (ACC) complex. First, biotin carboxylase catalyzes the carboxylation of biotin on its carrier protein (BCCP) and then the CO(2) group is transferred by the carboxyltransferase to acetyl-CoA to form malonyl-CoA. The protein is Acetyl-coenzyme A carboxylase carboxyl transferase subunit alpha of Halorhodospira halophila (strain DSM 244 / SL1) (Ectothiorhodospira halophila (strain DSM 244 / SL1)).